The following is a 213-amino-acid chain: 3-isopropylmalate dehydratase small subunit (213 aa).

Belongs to the LeuD family. LeuD type 1 subfamily. As to quaternary structure, heterodimer of LeuC and LeuD.

The enzyme catalyses (2R,3S)-3-isopropylmalate = (2S)-2-isopropylmalate. The protein operates within amino-acid biosynthesis; L-leucine biosynthesis; L-leucine from 3-methyl-2-oxobutanoate: step 2/4. Catalyzes the isomerization between 2-isopropylmalate and 3-isopropylmalate, via the formation of 2-isopropylmaleate. This Pseudomonas syringae pv. syringae (strain B728a) protein is 3-isopropylmalate dehydratase small subunit.